The sequence spans 76 residues: uncharacterized protein (76 aa).

This is an uncharacterized protein from Saccharomyces cerevisiae (strain ATCC 204508 / S288c) (Baker's yeast).